The sequence spans 398 residues: Phospholipase C (398 aa).

An N-terminal signal peptide occupies residues 1-28 (MKKKFLKGLCCAFVISITCLGASSKAYG). Residues tryptophan 29, histidine 39, aspartate 84, histidine 96, histidine 154, aspartate 158, histidine 164, histidine 176, and glutamate 180 each contribute to the Zn(2+) site. The 250-residue stretch at 29–278 (WDGKKDGTGT…YDVSKDLLPT (250 aa)) folds into the Zn-dependent PLC domain. Residues 275–283 (LLPTENHKI) form a linker region. The 115-residue stretch at 284–398 (NGLMVVIKTA…IHGNEKYYIN (115 aa)) folds into the PLAT domain. The Ca(2+) site is built by glycine 299, threonine 300, aspartate 301, aspartate 321, asparagine 322, glycine 324, asparagine 325, aspartate 326, and aspartate 364.

This sequence belongs to the bacterial zinc-metallophospholipase C family. Ca(2+) is required as a cofactor. It depends on Zn(2+) as a cofactor.

The protein localises to the secreted. It carries out the reaction a 1,2-diacyl-sn-glycero-3-phosphocholine + H2O = phosphocholine + a 1,2-diacyl-sn-glycerol + H(+). Functionally, bacterial hemolysins are exotoxins that attack blood cell membranes and cause cell rupture. Binds to eukaryotic membranes where it hydrolyzes phosphatidylcholine, sphingomyelin and phosphatidylethanolamine. The diacylglycerol produced can activate both the arachidonic acid pathway, leading to modulation of the inflammatory response cascade and thrombosis, and protein kinase C, leading to activation of eukaryotic phospholipases and further membrane damage. This enzyme is hemolytic against horse erythrocytes. The chain is Phospholipase C (plc) from Clostridium novyi.